Consider the following 118-residue polypeptide: Large ribosomal subunit protein bL20 (118 aa).

This sequence belongs to the bacterial ribosomal protein bL20 family.

Functionally, binds directly to 23S ribosomal RNA and is necessary for the in vitro assembly process of the 50S ribosomal subunit. It is not involved in the protein synthesizing functions of that subunit. The sequence is that of Large ribosomal subunit protein bL20 from Serratia proteamaculans (strain 568).